The chain runs to 267 residues: Putative transcription factor Ovo-like 1 (267 aa).

4 consecutive C2H2-type zinc fingers follow at residues 118-140, 146-168, 174-197, and 213-235; these read FTCH…MKCH, HLCT…VRTH, YKCS…KKIH, and YVCE…LKEH.

The protein localises to the nucleus. Its function is as follows. Putative transcription factor. Involved in hair formation and spermatogenesis. May function in the differentiation and/or maintenance of the urogenital system. The sequence is that of Putative transcription factor Ovo-like 1 (OVOL1) from Bos taurus (Bovine).